We begin with the raw amino-acid sequence, 439 residues long: Xylose isomerase (439 aa).

Active-site residues include histidine 101 and aspartate 104. Glutamate 232, glutamate 268, histidine 271, aspartate 296, aspartate 307, aspartate 309, and aspartate 339 together coordinate Mg(2+).

Belongs to the xylose isomerase family. Homotetramer. Requires Mg(2+) as cofactor.

It localises to the cytoplasm. The catalysed reaction is alpha-D-xylose = alpha-D-xylulofuranose. This chain is Xylose isomerase, found in Haemophilus influenzae (strain PittGG).